A 102-amino-acid polypeptide reads, in one-letter code: NADH-quinone oxidoreductase subunit K (102 aa).

Transmembrane regions (helical) follow at residues 6–26, 30–50, and 64–84; these read LGQG…GVLV, LLFM…AFIV, and FILV…LILL.

The protein belongs to the complex I subunit 4L family. As to quaternary structure, NDH-1 is composed of 14 different subunits. Subunits NuoA, H, J, K, L, M, N constitute the membrane sector of the complex.

Its subcellular location is the cell inner membrane. It catalyses the reaction a quinone + NADH + 5 H(+)(in) = a quinol + NAD(+) + 4 H(+)(out). Functionally, NDH-1 shuttles electrons from NADH, via FMN and iron-sulfur (Fe-S) centers, to quinones in the respiratory chain. The immediate electron acceptor for the enzyme in this species is believed to be ubiquinone. Couples the redox reaction to proton translocation (for every two electrons transferred, four hydrogen ions are translocated across the cytoplasmic membrane), and thus conserves the redox energy in a proton gradient. This chain is NADH-quinone oxidoreductase subunit K, found in Acidiphilium cryptum (strain JF-5).